A 142-amino-acid chain; its full sequence is Hemoglobin subunit theta-1 (142 aa).

Residues 2–142 (ALSAEDRALV…VISALVSEYR (141 aa)) enclose the Globin domain. The heme b site is built by histidine 59 and histidine 88.

The protein belongs to the globin family.

This Homo sapiens (Human) protein is Hemoglobin subunit theta-1 (HBQ1).